The following is a 119-amino-acid chain: Acidic phospholipase A2 CM-II (119 aa).

Ca(2+)-binding residues include Tyr25, Gly27, and Gly29. His45 is an active-site residue. Asp46 is a Ca(2+) binding site. The active site involves Asp87.

This sequence belongs to the phospholipase A2 family. Group II subfamily. D49 sub-subfamily. The cofactor is Ca(2+). Post-translationally, contains 6 disulfide bonds. In terms of tissue distribution, expressed by the venom gland.

It localises to the secreted. It carries out the reaction a 1,2-diacyl-sn-glycero-3-phosphocholine + H2O = a 1-acyl-sn-glycero-3-phosphocholine + a fatty acid + H(+). In terms of biological role, PLA2 catalyzes the calcium-dependent hydrolysis of the 2-acyl groups in 3-sn-phosphoglycerides. This chain is Acidic phospholipase A2 CM-II, found in Bitis nasicornis (Rhinoceros adder).